Here is an 896-residue protein sequence, read N- to C-terminus: Translation initiation factor IF-2 (896 aa).

The segment at 46–315 (LAHLNRQHGG…FNKPAQPVER (270 aa)) is disordered. Residues 99–247 (SASEEQEREE…RKQQEKEDVH (149 aa)) are compositionally biased toward basic and acidic residues. Basic residues predominate over residues 269 to 278 (SRKRGKKRRR). Residues 279-288 (KDEESDDTPR) are compositionally biased toward basic and acidic residues. The region spanning 396 to 565 (PRAPVVTVMG…LLQSEVLDLR (170 aa)) is the tr-type G domain. A G1 region spans residues 405 to 412 (GHVDHGKT). 405–412 (GHVDHGKT) is a GTP binding site. The tract at residues 430-434 (GITQH) is G2. A G3 region spans residues 451 to 454 (DTPG). GTP contacts are provided by residues 451-455 (DTPGH) and 505-508 (NKMD). The G4 stretch occupies residues 505–508 (NKMD). The G5 stretch occupies residues 541-543 (SAH).

The protein belongs to the TRAFAC class translation factor GTPase superfamily. Classic translation factor GTPase family. IF-2 subfamily.

The protein localises to the cytoplasm. In terms of biological role, one of the essential components for the initiation of protein synthesis. Protects formylmethionyl-tRNA from spontaneous hydrolysis and promotes its binding to the 30S ribosomal subunits. Also involved in the hydrolysis of GTP during the formation of the 70S ribosomal complex. The chain is Translation initiation factor IF-2 from Idiomarina loihiensis (strain ATCC BAA-735 / DSM 15497 / L2-TR).